The primary structure comprises 398 residues: Acetate kinase 1 (398 aa).

Asn9 serves as a coordination point for Mg(2+). Lys16 is an ATP binding site. A substrate-binding site is contributed by Arg89. Asp146 serves as the catalytic Proton donor/acceptor. ATP contacts are provided by residues 206–210, 281–283, and 329–333; these read HLGNG, DCR, and GIGEN. Glu384 provides a ligand contact to Mg(2+).

It belongs to the acetokinase family. In terms of assembly, homodimer. The cofactor is Mg(2+). Mn(2+) is required as a cofactor.

The protein resides in the cytoplasm. It catalyses the reaction acetate + ATP = acetyl phosphate + ADP. It participates in metabolic intermediate biosynthesis; acetyl-CoA biosynthesis; acetyl-CoA from acetate: step 1/2. Catalyzes the formation of acetyl phosphate from acetate and ATP. Can also catalyze the reverse reaction. The polypeptide is Acetate kinase 1 (Vibrio cholerae serotype O1 (strain ATCC 39315 / El Tor Inaba N16961)).